The following is a 114-amino-acid chain: Fumarate reductase subunit D (114 aa).

The next 3 helical transmembrane spans lie at 24 to 44 (VSAIFLPVVILIIGLLLPFGL), 50 to 70 (LITFAYSWIGKLVILVLTIFP), and 92 to 112 (GGFIFYGLATIYTVWVLFAVI).

This sequence belongs to the FrdD family. Part of an enzyme complex containing four subunits: a flavoprotein (FrdA), an iron-sulfur protein (FrdB), and two hydrophobic anchor proteins (FrdC and FrdD).

It is found in the cell inner membrane. In terms of biological role, anchors the catalytic components of the fumarate reductase complex to the cell membrane, binds quinones. This is Fumarate reductase subunit D from Haemophilus influenzae (strain ATCC 51907 / DSM 11121 / KW20 / Rd).